The following is a 956-amino-acid chain: MAKVRVHELARELGVDSKTVLAKLNELGEFVKSASSTIEAPVVRRLRESFPADSGGAANGAPAAPKPARAPKPAPKAAPAPPVEEAPAEPAPPAAPEVVAAPEAPVAAPEPPAPSREAEVPEAPAAERPAAQARPATPGPRPAPRAAEKPADTRTPRPGNNPFASSQGMPRPGGQGGPRPGGPRPSGGGGPRPGNNPFAPSQGMPRPGGSGAAGPRPGGTGAAGPRPGGSGQGGSRPSPGMMPGRSAVGRPGAPARGGSGGPGGGRGGPGGGRGGGGGFGGAPGRGGPGGAPGGGGGFSGGGRSGRGGRGGTQGAFGRAGGKPVRARKSRRAKRQEFEQMSAPSIGGVQVPRGDGTTVVRIRRGASLSDFADRIDANPASLVTVLFHLGEMATVTQALDAGTFEALGAELGYVIEIVSPEDEERELLGSFDIDLDAEAAAESDEDLEARPPVVTVMGHVDHGKTRLLDAIRSTDVVAGEAGGITQHIGAYQVHVTHEDADRAVTFLDTPGHEAFTAMRARGADVTDIAILVVAADDGVMPQTIEALNHAQAANVPIVVAVNKVDKEGANPDKVMQQLTEYNLVAEAYGGDTMFVNVSAKNGTGIDELLEAVLLTADAALDLRANPNKDARGVAIEANLDKGRGAVATVLVQSGTLTVGDSIVAGTAYGRVRAMFDENGDNLSEATPSRPVQVLGLTSVPRAGDSFLVAPDDRTARQIADKRDAAERAATLAKRRKRISLEDFTQALEQGKVSTLNLVLKGDVSGAVEALEDALLQLDVGAEVDLRIIHRGVGGITQNDVNLATVDNAIIIGFNVRPDVRVAELADREGVDIRYYSVIYAAIEDVENSLKGMLKPEFEEVQLGTAEVLQVFRSSKFGNIAGSRVRSGLIRRGASARVLRDSVVIGDNLSIGSLRREKDDVTEVRDGFECGIGLGSFNDLREGDVIETFEVREKERAS.

The segment at 50 to 351 (FPADSGGAAN…APSIGGVQVP (302 aa)) is disordered. Residues 64–95 (APKPARAPKPAPKAAPAPPVEEAPAEPAPPAA) show a composition bias toward pro residues. Low complexity-rich tracts occupy residues 96-107 (PEVVAAPEAPVA) and 121-136 (PEAP…ARPA). Residues 146–155 (AAEKPADTRT) are compositionally biased toward basic and acidic residues. 2 stretches are compositionally biased toward gly residues: residues 171–192 (RPGG…GGPR) and 206–234 (RPGG…GQGG). Positions 235-254 (SRPSPGMMPGRSAVGRPGAP) are enriched in low complexity. Positions 255–320 (ARGGSGGPGG…GTQGAFGRAG (66 aa)) are enriched in gly residues. A compositionally biased stretch (basic residues) spans 324-333 (VRARKSRRAK). The 172-residue stretch at 448–619 (ARPPVVTVMG…AVLLTADAAL (172 aa)) folds into the tr-type G domain. The G1 stretch occupies residues 457–464 (GHVDHGKT). 457–464 (GHVDHGKT) lines the GTP pocket. The G2 stretch occupies residues 482-486 (GITQH). Residues 507–510 (DTPG) are G3. GTP-binding positions include 507–511 (DTPGH) and 561–564 (NKVD). The segment at 561-564 (NKVD) is G4. Residues 597–599 (SAK) form a G5 region.

The protein belongs to the TRAFAC class translation factor GTPase superfamily. Classic translation factor GTPase family. IF-2 subfamily.

The protein localises to the cytoplasm. Its function is as follows. One of the essential components for the initiation of protein synthesis. Protects formylmethionyl-tRNA from spontaneous hydrolysis and promotes its binding to the 30S ribosomal subunits. Also involved in the hydrolysis of GTP during the formation of the 70S ribosomal complex. The protein is Translation initiation factor IF-2 of Beutenbergia cavernae (strain ATCC BAA-8 / DSM 12333 / CCUG 43141 / JCM 11478 / NBRC 16432 / NCIMB 13614 / HKI 0122).